The following is a 1054-amino-acid chain: Bifunctional glutamine synthetase adenylyltransferase/adenylyl-removing enzyme (1054 aa).

The tract at residues 1 to 535 (MRKTLPSIGA…LHRKLFYRPL (535 aa)) is adenylyl removase. Composition is skewed to polar residues over residues 138–150 (SFSSESQQPQGSD) and 165–175 (DTANTDLSTPG). The segment at 138–175 (SFSSESQQPQGSDSDSEFSFGADLSADDTANTDLSTPG) is disordered. The adenylyl transferase stretch occupies residues 541–1054 (NISVGTLKLS…WGVDSIEHDY (514 aa)).

The protein belongs to the GlnE family. Requires Mg(2+) as cofactor.

The catalysed reaction is [glutamine synthetase]-O(4)-(5'-adenylyl)-L-tyrosine + phosphate = [glutamine synthetase]-L-tyrosine + ADP. The enzyme catalyses [glutamine synthetase]-L-tyrosine + ATP = [glutamine synthetase]-O(4)-(5'-adenylyl)-L-tyrosine + diphosphate. Involved in the regulation of glutamine synthetase GlnA, a key enzyme in the process to assimilate ammonia. When cellular nitrogen levels are high, the C-terminal adenylyl transferase (AT) inactivates GlnA by covalent transfer of an adenylyl group from ATP to specific tyrosine residue of GlnA, thus reducing its activity. Conversely, when nitrogen levels are low, the N-terminal adenylyl removase (AR) activates GlnA by removing the adenylyl group by phosphorolysis, increasing its activity. The regulatory region of GlnE binds the signal transduction protein PII (GlnB) which indicates the nitrogen status of the cell. This chain is Bifunctional glutamine synthetase adenylyltransferase/adenylyl-removing enzyme, found in Corynebacterium diphtheriae (strain ATCC 700971 / NCTC 13129 / Biotype gravis).